Consider the following 883-residue polypeptide: Putative pentatricopeptide repeat-containing protein At1g13800 (883 aa).

PPR repeat units follow at residues 145–180 (LIRV…GRAP), 181–215 (DIKA…GLDA), 216–251 (DAHT…TRNP), 253–285 (VFYL…NILV), 290–324 (LGIA…GIDP), 325–359 (DVYV…RKRI), 360–394 (NCVI…NISL), 395–429 (DRVC…GIAP), 430–464 (DVIN…GKTP), 465–499 (DIVI…GVKP), 500–534 (TYVT…SREN), 537–561 (SMVK…LEFP), 563–598 (PKSV…GVEP), 599–633 (EKSM…KIVP), 634–668 (DLFT…DVKP), 697–731 (DVVY…EIVP), 760–794 (DVFY…GVDP), 795–829 (DAAP…GVKP), and 830–864 (DVVP…GIKP).

The protein belongs to the PPR family. P subfamily.

In Arabidopsis thaliana (Mouse-ear cress), this protein is Putative pentatricopeptide repeat-containing protein At1g13800.